A 300-amino-acid polypeptide reads, in one-letter code: GTPase Era (300 aa).

The 169-residue stretch at 8 to 176 folds into the Era-type G domain; the sequence is RCGYVAIVGR…EALIAKHLPE (169 aa). The interval 16–23 is G1; it reads GRPNVGKS. 16–23 is a binding site for GTP; it reads GRPNVGKS. Residues 42–46 form a G2 region; the sequence is QTTRH. The tract at residues 63 to 66 is G3; sequence DTPG. GTP is bound by residues 63–67 and 125–128; these read DTPGM and NKTD. Positions 125 to 128 are G4; that stretch reads NKTD. The tract at residues 155 to 157 is G5; that stretch reads ISA. Residues 199–283 enclose the KH type-2 domain; the sequence is VREKIMRQLG…MLNLWVKVKG (85 aa).

Belongs to the TRAFAC class TrmE-Era-EngA-EngB-Septin-like GTPase superfamily. Era GTPase family. In terms of assembly, monomer.

The protein resides in the cytoplasm. It is found in the cell inner membrane. In terms of biological role, an essential GTPase that binds both GDP and GTP, with rapid nucleotide exchange. Plays a role in 16S rRNA processing and 30S ribosomal subunit biogenesis and possibly also in cell cycle regulation and energy metabolism. This chain is GTPase Era, found in Pseudomonas putida (strain W619).